The following is a 263-amino-acid chain: Glucosamine-6-phosphate deaminase (263 aa).

Aspartate 72 serves as the catalytic Proton acceptor; for enolization step. The active-site For ring-opening step is aspartate 141. Histidine 143 functions as the Proton acceptor; for ring-opening step in the catalytic mechanism. The active-site For ring-opening step is the glutamate 148.

This sequence belongs to the glucosamine/galactosamine-6-phosphate isomerase family. NagB subfamily.

It catalyses the reaction alpha-D-glucosamine 6-phosphate + H2O = beta-D-fructose 6-phosphate + NH4(+). It participates in amino-sugar metabolism; N-acetylneuraminate degradation; D-fructose 6-phosphate from N-acetylneuraminate: step 5/5. With respect to regulation, allosterically activated by N-acetylglucosamine 6-phosphate (GlcNAc6P). Functionally, catalyzes the reversible isomerization-deamination of glucosamine 6-phosphate (GlcN6P) to form fructose 6-phosphate (Fru6P) and ammonium ion. This Porphyromonas gingivalis (strain ATCC 33277 / DSM 20709 / CIP 103683 / JCM 12257 / NCTC 11834 / 2561) protein is Glucosamine-6-phosphate deaminase.